The sequence spans 538 residues: Serine/threonine-protein phosphatase 5 (538 aa).

3 TPR repeats span residues 13–46 (AEEF…NSNN), 48–80 (VYWA…DSRY), and 81–114 (SKGY…SPND). 2 helical membrane-spanning segments follow: residues 163–183 (SSMP…VVAV) and 185–205 (GFAT…TFWW). Residues Asp282, His284, Asp311, and Asn343 each coordinate Mn(2+). His344 functions as the Proton donor in the catalytic mechanism. The Mn(2+) site is built by His392 and His467.

Belongs to the PPP phosphatase family. PP-5 (PP-T) subfamily. As to quaternary structure, interacts with PHYA and PHYB, mostly when they are phosphorylated and in Pfr forms. Mn(2+) serves as cofactor.

The protein localises to the endoplasmic reticulum membrane. Its subcellular location is the nucleus membrane. It is found in the cytoplasm. It localises to the nucleus. The protein resides in the nucleoplasm. The protein localises to the nucleus speckle. The enzyme catalyses O-phospho-L-seryl-[protein] + H2O = L-seryl-[protein] + phosphate. It carries out the reaction O-phospho-L-threonyl-[protein] + H2O = L-threonyl-[protein] + phosphate. Activated by arachidonic acid (AA). In terms of biological role, isoform 2 dephosphorylates phosphorylated phytochromes, with a preference toward Pfr forms, and enhances phytochrome-mediated photoresponses, probably by enhancing their stability and their binding affinity for light signal transducers such as NDPK2. Can use para-nitrophenylphosphate (pNPP) as substrate. This chain is Serine/threonine-protein phosphatase 5 (PAPP5), found in Arabidopsis thaliana (Mouse-ear cress).